Reading from the N-terminus, the 317-residue chain is 4-hydroxy-3-methylbut-2-enyl diphosphate reductase (317 aa).

A [4Fe-4S] cluster-binding site is contributed by Cys12. (2E)-4-hydroxy-3-methylbut-2-enyl diphosphate contacts are provided by His41 and His74. The dimethylallyl diphosphate site is built by His41 and His74. Isopentenyl diphosphate is bound by residues His41 and His74. Cys97 is a binding site for [4Fe-4S] cluster. His125 lines the (2E)-4-hydroxy-3-methylbut-2-enyl diphosphate pocket. His125 lines the dimethylallyl diphosphate pocket. His125 lines the isopentenyl diphosphate pocket. The active-site Proton donor is Glu127. Residue Thr168 participates in (2E)-4-hydroxy-3-methylbut-2-enyl diphosphate binding. Cys198 contributes to the [4Fe-4S] cluster binding site. Residues Ser226, Ser227, Asn228, and Ser270 each contribute to the (2E)-4-hydroxy-3-methylbut-2-enyl diphosphate site. Dimethylallyl diphosphate is bound by residues Ser226, Ser227, Asn228, and Ser270. Residues Ser226, Ser227, Asn228, and Ser270 each coordinate isopentenyl diphosphate.

It belongs to the IspH family. As to quaternary structure, homodimer. [4Fe-4S] cluster is required as a cofactor.

It catalyses the reaction isopentenyl diphosphate + 2 oxidized [2Fe-2S]-[ferredoxin] + H2O = (2E)-4-hydroxy-3-methylbut-2-enyl diphosphate + 2 reduced [2Fe-2S]-[ferredoxin] + 2 H(+). It carries out the reaction dimethylallyl diphosphate + 2 oxidized [2Fe-2S]-[ferredoxin] + H2O = (2E)-4-hydroxy-3-methylbut-2-enyl diphosphate + 2 reduced [2Fe-2S]-[ferredoxin] + 2 H(+). The protein operates within isoprenoid biosynthesis; dimethylallyl diphosphate biosynthesis; dimethylallyl diphosphate from (2E)-4-hydroxy-3-methylbutenyl diphosphate: step 1/1. It functions in the pathway isoprenoid biosynthesis; isopentenyl diphosphate biosynthesis via DXP pathway; isopentenyl diphosphate from 1-deoxy-D-xylulose 5-phosphate: step 6/6. In terms of biological role, catalyzes the conversion of 1-hydroxy-2-methyl-2-(E)-butenyl 4-diphosphate (HMBPP) into a mixture of isopentenyl diphosphate (IPP) and dimethylallyl diphosphate (DMAPP). Acts in the terminal step of the DOXP/MEP pathway for isoprenoid precursor biosynthesis. In Serratia proteamaculans (strain 568), this protein is 4-hydroxy-3-methylbut-2-enyl diphosphate reductase.